The chain runs to 436 residues: Probable ABC transporter binding protein NosD (436 aa).

The N-terminal stretch at 1-27 is a signal peptide; it reads MFKAQATFSRYSAAVSLLLLFSGAAQA. 8 PbH1 repeats span residues 85 to 113, 115 to 136, 137 to 166, 167 to 188, 189 to 210, 233 to 255, 293 to 314, and 316 to 354; these read APDVLVEGCTLYEWGSDLTAMDSAVFILP, AERAQISNNRMRGPGFGVFVDG, TRDVQVIGNEIDGDAGVRSQDRGNGIHLFA, VSGARVLHNHVRNARDGIYIDT, SNGNHLEGNVIEDVRYGVHYMF, SRKLTVTGNRSEQDQNYGILMNY, SLFNTIENNHFEKSSLGIHLTA, and SEDNRISGNAFVGNQQQVKYVASRTQEWSVDGRGNYWSD.

Belongs to the NosD family. In terms of assembly, the complex may be composed of an ATP-binding protein (NosF), a transmembrane protein (NosY) and a solute-binding protein (NosD).

It localises to the periplasm. Required for the assembly of the copper chromophores of nitrous oxide reductase. Could be part of the ABC transporter complex NosDFY. The chain is Probable ABC transporter binding protein NosD from Stutzerimonas stutzeri (Pseudomonas stutzeri).